The primary structure comprises 126 residues: Small ribosomal subunit protein bS6 (126 aa).

The segment at 103-126 (LKAKDERKAPEALVEEVEAEDADE) is disordered. Over residues 115 to 126 (LVEEVEAEDADE) the composition is skewed to acidic residues.

The protein belongs to the bacterial ribosomal protein bS6 family.

Binds together with bS18 to 16S ribosomal RNA. The protein is Small ribosomal subunit protein bS6 of Glaesserella parasuis serovar 5 (strain SH0165) (Haemophilus parasuis).